We begin with the raw amino-acid sequence, 222 residues long: Large ribosomal subunit protein uL1 (222 aa).

Belongs to the universal ribosomal protein uL1 family. In terms of assembly, part of the 50S ribosomal subunit.

Functionally, binds directly to 23S rRNA. Probably involved in E site tRNA release. In terms of biological role, protein L1 is also a translational repressor protein, it controls the translation of its operon by binding to its mRNA. The sequence is that of Large ribosomal subunit protein uL1 from Pyrobaculum islandicum (strain DSM 4184 / JCM 9189 / GEO3).